The chain runs to 238 residues: 6-phosphogluconolactonase (238 aa).

The protein belongs to the glucosamine/galactosamine-6-phosphate isomerase family. 6-phosphogluconolactonase subfamily.

It carries out the reaction 6-phospho-D-glucono-1,5-lactone + H2O = 6-phospho-D-gluconate + H(+). It participates in carbohydrate degradation; pentose phosphate pathway; D-ribulose 5-phosphate from D-glucose 6-phosphate (oxidative stage): step 2/3. Functionally, hydrolysis of 6-phosphogluconolactone to 6-phosphogluconate. This Pseudomonas aeruginosa (strain ATCC 15692 / DSM 22644 / CIP 104116 / JCM 14847 / LMG 12228 / 1C / PRS 101 / PAO1) protein is 6-phosphogluconolactonase (pgl).